The primary structure comprises 64 residues: Large ribosomal subunit protein bL35 (64 aa).

Over residues 1–10 the composition is skewed to polar residues; the sequence is MPKMKTNSAA. The disordered stretch occupies residues 1-64; that stretch reads MPKMKTNSAA…SKNMKKLLGR (64 aa).

This sequence belongs to the bacterial ribosomal protein bL35 family.

The protein is Large ribosomal subunit protein bL35 of Bifidobacterium adolescentis (strain ATCC 15703 / DSM 20083 / NCTC 11814 / E194a).